We begin with the raw amino-acid sequence, 265 residues long: Thiamine thiazole synthase (265 aa).

NAD(+) is bound by residues alanine 43, 62–63 (ER), glycine 70, valine 134, and 162–164 (HVD). The Fe cation site is built by aspartate 164 and histidine 179. An NAD(+)-binding site is contributed by methionine 229. Arginine 239 lines the glycine pocket.

The protein belongs to the THI4 family. In terms of assembly, homooctamer; tetramer of dimers. It depends on Fe(2+) as a cofactor.

It catalyses the reaction hydrogen sulfide + glycine + NAD(+) = ADP-5-ethyl-4-methylthiazole-2-carboxylate + nicotinamide + 3 H2O + H(+). It participates in cofactor biosynthesis; thiamine diphosphate biosynthesis. Involved in the biosynthesis of the thiazole moiety of thiamine. Catalyzes the conversion of NAD and glycine to adenosine diphosphate 5-(2-hydroxyethyl)-4-methylthiazole-2-carboxylate (ADT), an adenylated thiazole intermediate, using free sulfide as a source of sulfur. The protein is Thiamine thiazole synthase of Sulfolobus acidocaldarius (strain ATCC 33909 / DSM 639 / JCM 8929 / NBRC 15157 / NCIMB 11770).